The primary structure comprises 278 residues: Hydroxyethylthiazole kinase (278 aa).

Met51 serves as a coordination point for substrate. ATP-binding residues include Arg127 and Ser173. Gly201 provides a ligand contact to substrate.

Belongs to the Thz kinase family. The cofactor is Mg(2+).

The catalysed reaction is 5-(2-hydroxyethyl)-4-methylthiazole + ATP = 4-methyl-5-(2-phosphooxyethyl)-thiazole + ADP + H(+). The protein operates within cofactor biosynthesis; thiamine diphosphate biosynthesis; 4-methyl-5-(2-phosphoethyl)-thiazole from 5-(2-hydroxyethyl)-4-methylthiazole: step 1/1. Its function is as follows. Catalyzes the phosphorylation of the hydroxyl group of 4-methyl-5-beta-hydroxyethylthiazole (THZ). This is Hydroxyethylthiazole kinase from Leptothrix cholodnii (strain ATCC 51168 / LMG 8142 / SP-6) (Leptothrix discophora (strain SP-6)).